The following is a 418-amino-acid chain: Glutamyl-tRNA reductase (418 aa).

Residues 49–52 (TCNR), Ser105, 110–112 (EPQ), and Gln116 contribute to the substrate site. The active-site Nucleophile is Cys50. An NADP(+)-binding site is contributed by 185 to 190 (GAGEMI).

It belongs to the glutamyl-tRNA reductase family. As to quaternary structure, homodimer.

The catalysed reaction is (S)-4-amino-5-oxopentanoate + tRNA(Glu) + NADP(+) = L-glutamyl-tRNA(Glu) + NADPH + H(+). It participates in porphyrin-containing compound metabolism; protoporphyrin-IX biosynthesis; 5-aminolevulinate from L-glutamyl-tRNA(Glu): step 1/2. Catalyzes the NADPH-dependent reduction of glutamyl-tRNA(Glu) to glutamate 1-semialdehyde (GSA). The polypeptide is Glutamyl-tRNA reductase (Aromatoleum aromaticum (strain DSM 19018 / LMG 30748 / EbN1) (Azoarcus sp. (strain EbN1))).